Reading from the N-terminus, the 128-residue chain is Protein 2B* (128 aa).

Disordered stretches follow at residues 1–27 (PFMF…NPTA) and 92–128 (RDDN…RNSS). Polar residues predominate over residues 18–27 (SVINGSNPTA). Basic and acidic residues predominate over residues 111–128 (IDGRRDYKPDKSVRRNSS).

Belongs to the encephalomyocarditis virus protein 2B* family.

The polypeptide is Protein 2B* (Aotus trivirgatus (Three-striped night monkey)).